The sequence spans 681 residues: Probable glutamate carboxypeptidase LAMP1 (681 aa).

Residues 1-6 (MSKSKS) are Cytoplasmic-facing. Residues 7-24 (LAFVIAALSYSFFSLFSS) traverse the membrane as a helical; Signal-anchor for type II membrane protein segment. Topologically, residues 25–681 (PPKSHYHELF…ASLVLKGELI (657 aa)) are extracellular. Residues Asn42, Asn140, Asn166, and Asn299 are each glycosylated (N-linked (GlcNAc...) asparagine). Residues 241 to 527 (SVDGCERLSD…SVLGLVALRL (287 aa)) are catalytic. Residues His333 and Asp343 each contribute to the Zn(2+) site. Catalysis depends on Glu380, which acts as the Nucleophile. Glu381 and Asp409 together coordinate Zn(2+). Asn441 carries an N-linked (GlcNAc...) asparagine glycan. A Zn(2+)-binding site is contributed by His493. Asn536 carries N-linked (GlcNAc...) asparagine glycosylation.

Belongs to the peptidase M28 family. M28B subfamily. It depends on Zn(2+) as a cofactor.

The protein resides in the endoplasmic reticulum membrane. The enzyme catalyses Release of an unsubstituted, C-terminal glutamyl residue, typically from Ac-Asp-Glu or folylpoly-gamma-glutamates.. In terms of biological role, acts in association with AMP1 to suppress ectopic stem cell niche formation in the shoot apical meristem (SAM) independently of cytokinin signaling pathway. The polypeptide is Probable glutamate carboxypeptidase LAMP1 (Arabidopsis thaliana (Mouse-ear cress)).